A 98-amino-acid polypeptide reads, in one-letter code: Small ribosomal subunit protein bS6 (98 aa).

It belongs to the bacterial ribosomal protein bS6 family.

Its function is as follows. Binds together with bS18 to 16S ribosomal RNA. This Lactobacillus johnsonii (strain CNCM I-12250 / La1 / NCC 533) protein is Small ribosomal subunit protein bS6.